Here is a 129-residue protein sequence, read N- to C-terminus: ATP synthase epsilon chain (129 aa).

This sequence belongs to the ATPase epsilon chain family. As to quaternary structure, F-type ATPases have 2 components, CF(1) - the catalytic core - and CF(0) - the membrane proton channel. CF(1) has five subunits: alpha(3), beta(3), gamma(1), delta(1), epsilon(1). CF(0) has three main subunits: a, b and c.

The protein resides in the cell inner membrane. Its function is as follows. Produces ATP from ADP in the presence of a proton gradient across the membrane. The sequence is that of ATP synthase epsilon chain from Campylobacter jejuni subsp. jejuni serotype O:6 (strain 81116 / NCTC 11828).